The sequence spans 477 residues: Transcription factor Sox-9-A (477 aa).

Disordered regions lie at residues 1-66 (MNLL…ETED) and 157-274 (EAER…FRDV). Residues 27 to 42 (SDDSAGSPCPSGSGSD) show a composition bias toward low complexity. Basic and acidic residues-rich tracts occupy residues 56-66 (GDQELKKETED) and 157-174 (EAER…DYKY). Lys-61 is covalently cross-linked (Glycyl lysine isopeptide (Lys-Gly) (interchain with G-Cter in SUMO)). A dimerization (DIM) region spans residues 63 to 103 (ETEDEKFPVCIREAVSQVLKGYDWTLVPMPVRVNGSSKNKP). Positions 63 to 103 (ETEDEKFPVCIREAVSQVLKGYDWTLVPMPVRVNGSSKNKP) are PQA. A DNA-binding region (HMG box) is located at residues 105–173 (VKRPMNAFMV…QHKKDHPDYK (69 aa)). Residues 211 to 222 (SPHSSSSMSEVH) show a composition bias toward low complexity. The segment at 224–308 (PGEHSGQSQG…LPPNGHPGVG (85 aa)) is transactivation domain (TAM). 2 short sequence motifs (9aaTAD) span residues 276 to 285 (IGELSSEVIS) and 291 to 299 (DVNEFDQYL). Residues 301 to 384 (PNGHPGVGST…SDQQQQHSPQ (84 aa)) form a disordered region. 2 stretches are compositionally biased toward polar residues: residues 308–328 (GSTQ…SATT) and 346–361 (HSLS…SQQR). Positions 361 to 477 (RTHIKTEQLS…QPVYTQLTRP (117 aa)) are transactivation domain (TAC). A Glycyl lysine isopeptide (Lys-Gly) (interchain with G-Cter in SUMO) cross-link involves residue Lys-365. The span at 370-384 (SPSHYSDQQQQHSPQ) shows a compositional bias: low complexity. The 9aaTAD 3 signature appears at 428-436 (SGLYSTFSY). Positions 446 to 477 (TPIADTTGVPSIPQTHSPQHWEQPVYTQLTRP) are disordered. Residues 453 to 477 (GVPSIPQTHSPQHWEQPVYTQLTRP) are compositionally biased toward polar residues.

Interacts with the sumoylation factors ube2i/ubc9 and sumo1. Sumoylated. Lys-365 is the major site of sumoylation, although sumoylation at Lys-61 also occurs. Sumoylation plays a key role in regulating formation of the neural crest and otic placode. From mid-gastrula (stage 10.5-11), expressed in a ring around the blastopore, with expression decreasing toward the dorsal side. At stage 12, expression around the blastopore decreases and begins to increase lateral to the neural plate in the presumptive neural crest, where expression dramatically increases around stage 14. Also expressed in the otic placode as early as stage 13/14. By the tailbud stage expression is restricted to the otic cup and then throughout the otic vesicle, with more intense staining at the dorsal-most region, the prospective region of the semicircular canals and endolymphatic duct. At the early tailbud stage (stage 23), expressed in migrating cranial neural crest cells and in the trunk neural crest. Also expressed in the genital ridges, developing eye, nasal placode and prospective pineal gland. Around stage 25, expression is down-regulated in the trunk neural crest but persists in the migrating cranial crest cells as they populate the pharyngeal arches, otic placode, developing eye, genital ridges and notochord. By stage 31, expression remains strong in the pharyngeal arches. Also expressed in the pancreas; first expressed at stage 25 in the pancreatic anlagen, dorsally in diverticulum. As development proceeds, expression continues in pancreatic tissue, being restricted to ventral and dorsal pancreatic buds.

It localises to the nucleus. It is found in the cytoplasm. Functionally, transcription factor that plays a key role in chondrocytes differentiation and skeletal development. Specifically binds the 5'-ACAAAG-3' DNA motif present in enhancers and super-enhancers and promotes expression of genes important for chondrogenesis, including COL2A1. Plays a central role in successive steps of chondrocyte differentiation. Absolutely required for precartilaginous condensation, the first step in chondrogenesis during which skeletal progenitors differentiate into prechondrocytes. Together with SOX5 and SOX6, required for overt chondrogenesis when condensed prechondrocytes differentiate into early stage chondrocytes, the second step in chondrogenesis. Later, required to direct hypertrophic maturation and block osteoblast differentiation of growth plate chondrocytes: maintains chondrocyte columnar proliferation, delays prehypertrophy and then prevents osteoblastic differentiation of chondrocytes. Also required for chondrocyte hypertrophy, both indirectly, by keeping the lineage fate of chondrocytes, and directly, by remaining present in upper hypertrophic cells. Low lipid levels are the main nutritional determinant for chondrogenic commitment of skeletal progenitor cells: when lipids levels are low, FOXO transcription factors promote expression of SOX9, which induces chondrogenic commitment and suppresses fatty acid oxidation. In addition to cartilage development, also acts as a regulator of proliferation and differentiation in epithelial stem/progenitor cells. Involved in development of the cranial neural crest, which is fated to form skeletal elements. Also required for otic placode specification during inner ear development. This is Transcription factor Sox-9-A (sox9-a) from Xenopus laevis (African clawed frog).